The following is a 342-amino-acid chain: Flagellar P-ring protein (342 aa).

The signal sequence occupies residues 1–19; sequence MKRVFLWLIFVLAFHKLLA.

Belongs to the FlgI family. The basal body constitutes a major portion of the flagellar organelle and consists of four rings (L,P,S, and M) mounted on a central rod.

It localises to the periplasm. The protein resides in the bacterial flagellum basal body. Functionally, assembles around the rod to form the L-ring and probably protects the motor/basal body from shearing forces during rotation. The protein is Flagellar P-ring protein of Helicobacter pylori (strain P12).